Here is a 254-residue protein sequence, read N- to C-terminus: Adenosylcobinamide-GDP ribazoletransferase (254 aa).

6 helical membrane-spanning segments follow: residues phenylalanine 28–leucine 48, isoleucine 62–isoleucine 81, valine 109–leucine 129, valine 138–valine 158, leucine 179–glycine 199, and alanine 200–tryptophan 220.

It belongs to the CobS family. Mg(2+) is required as a cofactor.

The protein resides in the cell membrane. It carries out the reaction alpha-ribazole + adenosylcob(III)inamide-GDP = adenosylcob(III)alamin + GMP + H(+). The catalysed reaction is alpha-ribazole 5'-phosphate + adenosylcob(III)inamide-GDP = adenosylcob(III)alamin 5'-phosphate + GMP + H(+). It participates in cofactor biosynthesis; adenosylcobalamin biosynthesis; adenosylcobalamin from cob(II)yrinate a,c-diamide: step 7/7. Functionally, joins adenosylcobinamide-GDP and alpha-ribazole to generate adenosylcobalamin (Ado-cobalamin). Also synthesizes adenosylcobalamin 5'-phosphate from adenosylcobinamide-GDP and alpha-ribazole 5'-phosphate. The polypeptide is Adenosylcobinamide-GDP ribazoletransferase (Haloquadratum walsbyi (strain DSM 16790 / HBSQ001)).